The chain runs to 392 residues: S-adenosylmethionine synthase (392 aa).

Residue histidine 22 participates in ATP binding. Residue aspartate 24 participates in Mg(2+) binding. Glutamate 50 contacts K(+). Glutamate 63 and glutamine 106 together coordinate L-methionine. The flexible loop stretch occupies residues 106 to 116; sequence QSPDITQGVTL. Residues 170–172, 236–237, aspartate 245, 251–252, alanine 268, and lysine 272 each bind ATP; these read DGK, KF, and RK. Aspartate 245 contributes to the L-methionine binding site. Lysine 276 serves as a coordination point for L-methionine.

It belongs to the AdoMet synthase family. In terms of assembly, homotetramer; dimer of dimers. It depends on Mg(2+) as a cofactor. K(+) serves as cofactor.

It is found in the cytoplasm. It catalyses the reaction L-methionine + ATP + H2O = S-adenosyl-L-methionine + phosphate + diphosphate. The protein operates within amino-acid biosynthesis; S-adenosyl-L-methionine biosynthesis; S-adenosyl-L-methionine from L-methionine: step 1/1. Functionally, catalyzes the formation of S-adenosylmethionine (AdoMet) from methionine and ATP. The overall synthetic reaction is composed of two sequential steps, AdoMet formation and the subsequent tripolyphosphate hydrolysis which occurs prior to release of AdoMet from the enzyme. The polypeptide is S-adenosylmethionine synthase (Sulfurimonas denitrificans (strain ATCC 33889 / DSM 1251) (Thiomicrospira denitrificans (strain ATCC 33889 / DSM 1251))).